The primary structure comprises 663 residues: Alpha-1,4-glucan:maltose-1-phosphate maltosyltransferase (663 aa).

Residues 238-266 (IGETNRKGPDDAPEAGPDDPGSPWAIGGF) are disordered. Residues Lys-244, Gln-309, and Asp-344 each coordinate alpha-maltose 1-phosphate. Asp-380 functions as the Nucleophile in the catalytic mechanism. Residue Asn-381 participates in alpha-maltose 1-phosphate binding. Glu-409 functions as the Proton donor in the catalytic mechanism. 521–522 (KY) is a binding site for alpha-maltose 1-phosphate.

This sequence belongs to the glycosyl hydrolase 13 family. GlgE subfamily. As to quaternary structure, homodimer.

The enzyme catalyses alpha-maltose 1-phosphate + [(1-&gt;4)-alpha-D-glucosyl](n) = [(1-&gt;4)-alpha-D-glucosyl](n+2) + phosphate. Its function is as follows. Maltosyltransferase that uses maltose 1-phosphate (M1P) as the sugar donor to elongate linear or branched alpha-(1-&gt;4)-glucans. Is involved in a branched alpha-glucan biosynthetic pathway from trehalose, together with TreS, Mak and GlgB. The polypeptide is Alpha-1,4-glucan:maltose-1-phosphate maltosyltransferase (Salinibacter ruber (strain DSM 13855 / M31)).